The primary structure comprises 352 residues: Carbohydrate sulfotransferase 11 (352 aa).

Over 1–16 the chain is Cytoplasmic; sequence MKPALLEVMRMNRICR. The chain crosses the membrane as a helical; Signal-anchor for type II membrane protein span at residues 17–37; sequence MVLATCLGSFILVIFYFQSML. The Lumenal portion of the chain corresponds to 38–352; that stretch reads HPVMRRNPFG…YSVPNYLKLD (315 aa). Residues 124–130 and 186–194 contribute to the 3'-phosphoadenylyl sulfate site; these read PKVACTN and REPFERLVS. N-linked (GlcNAc...) asparagine glycans are attached at residues asparagine 205, asparagine 223, asparagine 321, and asparagine 342.

It belongs to the sulfotransferase 2 family. N-glycosylated; required for activity and stability.

Its subcellular location is the golgi apparatus membrane. The enzyme catalyses chondroitin beta-D-glucuronate + n 3'-phosphoadenylyl sulfate = chondroitin 4'-sulfate + n adenosine 3',5'-bisphosphate + n H(+). Its function is as follows. Catalyzes the transfer of sulfate to position 4 of the N-acetylgalactosamine (GalNAc) residue of chondroitin. Chondroitin sulfate constitutes the predominant proteoglycan present in cartilage and is distributed on the surfaces of many cells and extracellular matrices. Can also sulfate Gal residues in desulfated dermatan sulfate. Preferentially sulfates in GlcA-&gt;GalNAc unit than in IdoA-&gt;GalNAc unit. Does not form 4, 6-di-O-sulfated GalNAc when chondroitin sulfate C is used as an acceptor. The chain is Carbohydrate sulfotransferase 11 (Chst11) from Rattus norvegicus (Rat).